The primary structure comprises 105 residues: Pyrimidine/purine nucleoside phosphorylase (105 aa).

It belongs to the nucleoside phosphorylase PpnP family.

It carries out the reaction a purine D-ribonucleoside + phosphate = a purine nucleobase + alpha-D-ribose 1-phosphate. The enzyme catalyses adenosine + phosphate = alpha-D-ribose 1-phosphate + adenine. It catalyses the reaction cytidine + phosphate = cytosine + alpha-D-ribose 1-phosphate. The catalysed reaction is guanosine + phosphate = alpha-D-ribose 1-phosphate + guanine. It carries out the reaction inosine + phosphate = alpha-D-ribose 1-phosphate + hypoxanthine. The enzyme catalyses thymidine + phosphate = 2-deoxy-alpha-D-ribose 1-phosphate + thymine. It catalyses the reaction uridine + phosphate = alpha-D-ribose 1-phosphate + uracil. The catalysed reaction is xanthosine + phosphate = alpha-D-ribose 1-phosphate + xanthine. Functionally, catalyzes the phosphorolysis of diverse nucleosides, yielding D-ribose 1-phosphate and the respective free bases. Can use uridine, adenosine, guanosine, cytidine, thymidine, inosine and xanthosine as substrates. Also catalyzes the reverse reactions. The protein is Pyrimidine/purine nucleoside phosphorylase of Cupriavidus necator (strain ATCC 17699 / DSM 428 / KCTC 22496 / NCIMB 10442 / H16 / Stanier 337) (Ralstonia eutropha).